Here is a 112-residue protein sequence, read N- to C-terminus: UPF0482 protein SG1468 (112 aa).

The first 22 residues, 1 to 22 (MNTIPTRCLLGGLLALSLLAYA), serve as a signal peptide directing secretion.

Belongs to the UPF0482 family.

This is UPF0482 protein SG1468 from Sodalis glossinidius (strain morsitans).